The chain runs to 482 residues: Probable 2-carboxy-D-arabinitol-1-phosphatase (482 aa).

A chloroplast-targeting transit peptide spans 1–34 (MISLPLTTPILPSRCLLHKTRRQNSTRRRLLIRS). Catalysis depends on His-55, which acts as the Tele-phosphohistidine intermediate. The active-site Proton donor/acceptor is Glu-129.

It belongs to the phosphoglycerate mutase family.

It is found in the plastid. It localises to the chloroplast stroma. The enzyme catalyses 2-carboxy-D-arabinitol 1-phosphate + H2O = 2-carboxy-D-arabinitol + phosphate. In terms of biological role, phosphoglycerate mutase-like protein lacking PGM activity, but having 2-carboxy-D-arabinitol 1-phosphate (CA1P) phosphatase activity. Prevents the accumulation of D-glycero-2,3-pentodiulose-1,5-bisphosphate (PDBP) a potent inhibitor of ribulose-1,5-bisphosphate carboxylase (RuBisCO). PDBP is produced during the oxidation of ribulose-1,5-bisphosphate, the substrate of RuBisCO. The protein is Probable 2-carboxy-D-arabinitol-1-phosphatase of Arabidopsis thaliana (Mouse-ear cress).